A 365-amino-acid polypeptide reads, in one-letter code: Ferredoxin--NADP reductase, chloroplastic (365 aa).

The tract at residues 1-22 (MAAAVTAAVSFPSTKSTPLSTR) is disordered. Polar residues predominate over residues 11-22 (FPSTKSTPLSTR). An FAD-binding FR-type domain is found at 86-208 (KNPYTGRCLL…TGPVGKEMLM (123 aa)). FAD contacts are provided by residues 144–147 (RLYS), 165–167 (CVK), Tyr171, 182–184 (VCS), and Thr223. NADP(+)-binding residues include Ser147 and Lys167. NADP(+)-binding positions include Thr223, 255 to 256 (VP), 285 to 286 (SR), Lys295, 324 to 325 (GL), and Glu363.

The protein belongs to the ferredoxin--NADP reductase type 1 family. It depends on FAD as a cofactor.

The protein localises to the plastid. The protein resides in the chloroplast stroma. It localises to the chloroplast thylakoid membrane. The enzyme catalyses 2 reduced [2Fe-2S]-[ferredoxin] + NADP(+) + H(+) = 2 oxidized [2Fe-2S]-[ferredoxin] + NADPH. Its pathway is energy metabolism; photosynthesis. May play a key role in regulating the relative amounts of cyclic and non-cyclic electron flow to meet the demands of the plant for ATP and reducing power. The polypeptide is Ferredoxin--NADP reductase, chloroplastic (PETH) (Mesembryanthemum crystallinum (Common ice plant)).